The sequence spans 241 residues: ATP synthase subunit a (241 aa).

The next 5 membrane-spanning stretches (helical) occupy residues 30-50, 91-111, 128-148, 193-213, and 214-234; these read GQVFLTSWILLGALLVFISFG, FIGTLFLFVFVSNWGGALIPW, INTTIALALLVSLSYFYAGLS, LVVGVLVFLVPLILPIPVMFL, and GLFTSAIQALIFATLAAYYIG.

The protein belongs to the ATPase A chain family. In terms of assembly, F-type ATPases have 2 components, CF(1) - the catalytic core - and CF(0) - the membrane proton channel. CF(1) has five subunits: alpha(3), beta(3), gamma(1), delta(1), epsilon(1). CF(0) has four main subunits: a, b, b' and c.

It is found in the cellular thylakoid membrane. In terms of biological role, key component of the proton channel; it plays a direct role in the translocation of protons across the membrane. This chain is ATP synthase subunit a, found in Prochlorococcus marinus (strain AS9601).